The sequence spans 226 residues: Triosephosphate isomerase (226 aa).

Residue 12-14 (NFK) participates in substrate binding. The active-site Electrophile is the His-96. Catalysis depends on Glu-144, which acts as the Proton acceptor. Substrate is bound by residues Ile-149, Gly-184, and 205–206 (AS).

This sequence belongs to the triosephosphate isomerase family. In terms of assembly, homotetramer; dimer of dimers.

It is found in the cytoplasm. It carries out the reaction D-glyceraldehyde 3-phosphate = dihydroxyacetone phosphate. The protein operates within carbohydrate biosynthesis; gluconeogenesis. It participates in carbohydrate degradation; glycolysis; D-glyceraldehyde 3-phosphate from glycerone phosphate: step 1/1. In terms of biological role, involved in the gluconeogenesis. Catalyzes stereospecifically the conversion of dihydroxyacetone phosphate (DHAP) to D-glyceraldehyde-3-phosphate (G3P). This is Triosephosphate isomerase from Thermococcus kodakarensis (strain ATCC BAA-918 / JCM 12380 / KOD1) (Pyrococcus kodakaraensis (strain KOD1)).